A 368-amino-acid chain; its full sequence is Proline-rich protein 5-like (368 aa).

A Phosphoserine modification is found at serine 28. Positions 327 to 368 (PSFPPPHRQCSSEPNITDNPDGLEEGARGSQEGSELNCASLS) are disordered. Composition is skewed to polar residues over residues 335–344 (QCSSEPNITD) and 357–368 (QEGSELNCASLS).

The protein belongs to the PROTOR family. As to quaternary structure, interacts with the mammalian target of rapamycin complex 2 (mTORC2) which contains MTOR, MLST8, PRR5, RICTOR, MAPKAP1 and DEPTOR. Interacts with RFFL. Interacts (via C-terminus) with ZFP36 (via C-terminus); this interaction may accelerate ZFP36-mediated mRNA decay during stress. Interacts with RICTOR. Ubiquitinated. Ubiquitination by RFFL promotes proteasomal degradation of PRR5L thereby modifying the substrate-specific activity of the mTORC2 complex. Ubiquitination by RFFL is stimulated by LPA/lysophosphatidic acid.

In terms of biological role, associates with the mTORC2 complex that regulates cellular processes including survival and organization of the cytoskeleton. Regulates the activity of the mTORC2 complex in a substrate-specific manner preventing for instance the specific phosphorylation of PKCs and thereby controlling cell migration. Plays a role in the stimulation of ZFP36-mediated mRNA decay of several ZFP36-associated mRNAs, such as TNF-alpha and GM-CSF, in response to stress. Required for ZFP36 localization to cytoplasmic stress granule (SG) and P-body (PB) in response to stress. This is Proline-rich protein 5-like (PRR5L) from Homo sapiens (Human).